A 422-amino-acid polypeptide reads, in one-letter code: Enolase 2 (422 aa).

Gln162 contacts (2R)-2-phosphoglycerate. The active-site Proton donor is Glu204. Mg(2+) contacts are provided by Asp241, Glu285, and Asp312. 4 residues coordinate (2R)-2-phosphoglycerate: Lys337, Arg366, Ser367, and Lys388. Lys337 acts as the Proton acceptor in catalysis.

This sequence belongs to the enolase family. Mg(2+) is required as a cofactor.

It is found in the cytoplasm. The protein resides in the secreted. The protein localises to the cell surface. It carries out the reaction (2R)-2-phosphoglycerate = phosphoenolpyruvate + H2O. It functions in the pathway carbohydrate degradation; glycolysis; pyruvate from D-glyceraldehyde 3-phosphate: step 4/5. Functionally, catalyzes the reversible conversion of 2-phosphoglycerate (2-PG) into phosphoenolpyruvate (PEP). It is essential for the degradation of carbohydrates via glycolysis. In Lactococcus lactis subsp. lactis (strain IL1403) (Streptococcus lactis), this protein is Enolase 2.